A 300-amino-acid polypeptide reads, in one-letter code: 33 kDa chaperonin (300 aa).

2 disulfides stabilise this stretch: Cys-235–Cys-237 and Cys-269–Cys-272.

It belongs to the HSP33 family. Post-translationally, under oxidizing conditions two disulfide bonds are formed involving the reactive cysteines. Under reducing conditions zinc is bound to the reactive cysteines and the protein is inactive.

The protein localises to the cytoplasm. Its function is as follows. Redox regulated molecular chaperone. Protects both thermally unfolding and oxidatively damaged proteins from irreversible aggregation. Plays an important role in the bacterial defense system toward oxidative stress. The chain is 33 kDa chaperonin from Pseudomonas syringae pv. tomato (strain ATCC BAA-871 / DC3000).